Reading from the N-terminus, the 529-residue chain is Putative E3 ubiquitin-protein ligase ARI4 (529 aa).

Acidic residues predominate over residues 1 to 22; the sequence is MDDEYMSLEEEEDNCYPSEFDD. Residues 1-23 are disordered; it reads MDDEYMSLEEEEDNCYPSEFDDH. The TRIAD supradomain stretch occupies residues 115-327; it reads KTMKCDICME…IAGHSCGRYK (213 aa). Zn(2+) is bound by residues Cys119, Cys122, Cys137, His139, Cys142, Cys145, Cys164, Cys169, Cys206, Cys212, Cys230, Cys232, Cys237, Cys240, His245, Cys250, Cys277, and Cys280. The RING-type 1 zinc-finger motif lies at 119 to 169; it reads CDICMEEDLSKYAMTRMECGHRFCNDCWKEHFTVRINEGEGKRIRCMAYKC. The segment at 186–250 adopts an IBR-type zinc-finger fold; sequence EKFDRFLIES…LSESHSPCSC (65 aa). The segment at 277–305 adopts an RING-type 2; atypical zinc-finger fold; the sequence is CPKCSKPIQKRDGCNHMTCKCGQHFCWLC. The active site involves Cys290. Zn(2+) is bound by residues Cys295, Cys297, Cys302, Cys305, His313, and Cys323.

It belongs to the RBR family. Ariadne subfamily. Zn(2+) is required as a cofactor.

It carries out the reaction [E2 ubiquitin-conjugating enzyme]-S-ubiquitinyl-L-cysteine + [acceptor protein]-L-lysine = [E2 ubiquitin-conjugating enzyme]-L-cysteine + [acceptor protein]-N(6)-ubiquitinyl-L-lysine.. It functions in the pathway protein modification; protein ubiquitination. Functionally, might act as an E3 ubiquitin-protein ligase, or as part of E3 complex, which accepts ubiquitin from specific E2 ubiquitin-conjugating enzymes and then transfers it to substrates. This Arabidopsis thaliana (Mouse-ear cress) protein is Putative E3 ubiquitin-protein ligase ARI4 (ARI4).